The chain runs to 314 residues: Carbamate kinase (314 aa).

It belongs to the carbamate kinase family. Homodimer.

It is found in the cytoplasm. The enzyme catalyses hydrogencarbonate + NH4(+) + ATP = carbamoyl phosphate + ADP + H2O + H(+). In terms of biological role, carbamate kinase that plays a biosynthetic role in that it produces carbamoyl-phosphate. The chain is Carbamate kinase (cpkA) from Pyrococcus furiosus (strain ATCC 43587 / DSM 3638 / JCM 8422 / Vc1).